A 126-amino-acid chain; its full sequence is Fluoride-specific ion channel FluC (126 aa).

A run of 4 helical transmembrane segments spans residues 3–23 (LSIL…WFLG), 35–55 (LGTL…VAYF), 68–88 (FIIT…AEVV), and 103–123 (IAIH…TVAV). Na(+) contacts are provided by Gly-75 and Ser-78.

Belongs to the fluoride channel Fluc/FEX (TC 1.A.43) family.

The protein resides in the cell inner membrane. The enzyme catalyses fluoride(in) = fluoride(out). Na(+) is not transported, but it plays an essential structural role and its presence is essential for fluoride channel function. Functionally, fluoride-specific ion channel. Important for reducing fluoride concentration in the cell, thus reducing its toxicity. This is Fluoride-specific ion channel FluC from Paraburkholderia phymatum (strain DSM 17167 / CIP 108236 / LMG 21445 / STM815) (Burkholderia phymatum).